Reading from the N-terminus, the 294-residue chain is Acetylglutamate kinase (294 aa).

Residues 63–64 (GG), Arg85, and Asn188 each bind substrate.

It belongs to the acetylglutamate kinase family. ArgB subfamily.

It localises to the cytoplasm. The enzyme catalyses N-acetyl-L-glutamate + ATP = N-acetyl-L-glutamyl 5-phosphate + ADP. Its pathway is amino-acid biosynthesis; L-arginine biosynthesis; N(2)-acetyl-L-ornithine from L-glutamate: step 2/4. Catalyzes the ATP-dependent phosphorylation of N-acetyl-L-glutamate. This Methanococcus vannielii (strain ATCC 35089 / DSM 1224 / JCM 13029 / OCM 148 / SB) protein is Acetylglutamate kinase.